Consider the following 336-residue polypeptide: Probable allantoicase 2 (336 aa).

It belongs to the allantoicase family.

It catalyses the reaction allantoate + H2O = (S)-ureidoglycolate + urea. It functions in the pathway nitrogen metabolism; (S)-allantoin degradation; (S)-ureidoglycolate from allantoate (aminidohydrolase route): step 1/1. The polypeptide is Probable allantoicase 2 (Burkholderia pseudomallei (strain K96243)).